Here is an 85-residue protein sequence, read N- to C-terminus: UPF0297 protein LBUL_1485 (85 aa).

The protein belongs to the UPF0297 family.

This is UPF0297 protein LBUL_1485 from Lactobacillus delbrueckii subsp. bulgaricus (strain ATCC BAA-365 / Lb-18).